A 236-amino-acid chain; its full sequence is Ribosome-inactivating protein saporin-3 (236 aa).

E148 is a catalytic residue.

Belongs to the ribosome-inactivating protein family. Type 1 RIP subfamily.

The enzyme catalyses Endohydrolysis of the N-glycosidic bond at one specific adenosine on the 28S rRNA.. Ribosome-inactivating protein of type 1, inhibits protein synthesis in animal cells. Useful as immunotoxin for pharmacological applications. This is Ribosome-inactivating protein saporin-3 (SAP3) from Saponaria officinalis (Common soapwort).